We begin with the raw amino-acid sequence, 194 residues long: Probable GTP-binding protein EngB (194 aa).

One can recognise an EngB-type G domain in the interval 22–194; the sequence is DLPEFALAGR…KFWDWIEDKM (173 aa). GTP-binding positions include 30-37, 57-61, 75-78, 142-145, and 175-177; these read GRSNVGKS, GKTQT, DVPG, TKMD, and FSS. Residues S37 and T59 each coordinate Mg(2+).

The protein belongs to the TRAFAC class TrmE-Era-EngA-EngB-Septin-like GTPase superfamily. EngB GTPase family. Requires Mg(2+) as cofactor.

In terms of biological role, necessary for normal cell division and for the maintenance of normal septation. This Lactobacillus gasseri (strain ATCC 33323 / DSM 20243 / BCRC 14619 / CIP 102991 / JCM 1131 / KCTC 3163 / NCIMB 11718 / NCTC 13722 / AM63) protein is Probable GTP-binding protein EngB.